Reading from the N-terminus, the 112-residue chain is Cytochrome c3 (112 aa).

16 residues coordinate heme c: His26, His29, Cys34, Cys37, His38, His39, Cys49, Cys54, His55, His73, Cys83, Cys86, His87, Cys104, Cys109, and His110.

The cofactor is heme.

Participates in sulfate respiration coupled with phosphorylation by transferring electrons from the enzyme dehydrogenase to ferredoxin. This chain is Cytochrome c3, found in Megalodesulfovibrio gigas (strain ATCC 19364 / DSM 1382 / NCIMB 9332 / VKM B-1759) (Desulfovibrio gigas).